The following is a 568-amino-acid chain: MVESDKSSVEELKKRVRKRSRGKKNEQQKAEEKTHTVEENADETQKKSEKKVKKVRGKIEEEEEKVEAMEDGEDEKNIVIVGKGIMTNVTFDSLDLSEQTSIAIKEMGFQYMTQIQAGSIQPLLEGKDVLGAARTGSGKTLAFLIPAVELLFKERFSPRNGTGVIVICPTRELAIQTKNVAEELLKHHSQTVSMVIGGNNRRSEAQRIASGSNLVIATPGRLLDHLQNTKAFIYKHLKCLVIDEADRILEENFEEDMNKILKILPKTRQTALFSATQTSKVKDLARVSLTSPVHVDVDDGRRKVTNEGLEQGYCVVPSKQRLILLISFLKKNLNKKIMVFFSTCKSVQFHTEIMKISDVDVSDIHGGMDQNRRTKTFFDFMKAKKGILLCTDVAARGLDIPSVDWIIQYDPPDKPTEYIHRVGRTARGEGAKGKALLVLIPEELQFIRYLKAAKVPVKELEFNEKRLSNVQSALEKCVAKDYNLNKLAKDAYRAYLSAYNSHSLKDIFNVHRLDLLAVAESFCFSSPPKVNLNIESGAGKVRKARKQQGRNGFSPYSPYGKSTPTKEA.

Composition is skewed to basic and acidic residues over residues 1-13 and 23-47; these read MVES…EELK and KKNE…TQKK. The interval 1–70 is disordered; it reads MVESDKSSVE…EEEEKVEAME (70 aa). Residues 13–78 are a coiled coil; it reads KKRVRKRSRG…MEDGEDEKNI (66 aa). A compositionally biased stretch (acidic residues) spans 60–70; sequence EEEEEKVEAME. The Q motif motif lies at 89 to 117; the sequence is VTFDSLDLSEQTSIAIKEMGFQYMTQIQA. In terms of domain architecture, Helicase ATP-binding spans 120–295; sequence IQPLLEGKDV…RVSLTSPVHV (176 aa). 133 to 140 is an ATP binding site; sequence ARTGSGKT. Positions 243–246 match the DEAD box motif; it reads DEAD. The region spanning 321-468 is the Helicase C-terminal domain; that stretch reads RLILLISFLK…ELEFNEKRLS (148 aa). The segment at 540-568 is disordered; it reads KVRKARKQQGRNGFSPYSPYGKSTPTKEA.

It belongs to the DEAD box helicase family. DDX18/HAS1 subfamily.

The catalysed reaction is ATP + H2O = ADP + phosphate + H(+). The protein is DEAD-box ATP-dependent RNA helicase 51 (RH51) of Arabidopsis thaliana (Mouse-ear cress).